The following is a 97-amino-acid chain: Aspartyl/glutamyl-tRNA(Asn/Gln) amidotransferase subunit C (97 aa).

It belongs to the GatC family. As to quaternary structure, heterotrimer of A, B and C subunits.

The enzyme catalyses L-glutamyl-tRNA(Gln) + L-glutamine + ATP + H2O = L-glutaminyl-tRNA(Gln) + L-glutamate + ADP + phosphate + H(+). The catalysed reaction is L-aspartyl-tRNA(Asn) + L-glutamine + ATP + H2O = L-asparaginyl-tRNA(Asn) + L-glutamate + ADP + phosphate + 2 H(+). Its function is as follows. Allows the formation of correctly charged Asn-tRNA(Asn) or Gln-tRNA(Gln) through the transamidation of misacylated Asp-tRNA(Asn) or Glu-tRNA(Gln) in organisms which lack either or both of asparaginyl-tRNA or glutaminyl-tRNA synthetases. The reaction takes place in the presence of glutamine and ATP through an activated phospho-Asp-tRNA(Asn) or phospho-Glu-tRNA(Gln). In Anaeromyxobacter dehalogenans (strain 2CP-C), this protein is Aspartyl/glutamyl-tRNA(Asn/Gln) amidotransferase subunit C.